A 164-amino-acid chain; its full sequence is Nucleotide-binding protein Emin_0136 (164 aa).

The protein belongs to the YajQ family.

In terms of biological role, nucleotide-binding protein. The polypeptide is Nucleotide-binding protein Emin_0136 (Elusimicrobium minutum (strain Pei191)).